We begin with the raw amino-acid sequence, 69 residues long: Metallothionein-like protein CRS5 (69 aa).

This sequence belongs to the metallothionein superfamily. Type 13 family.

Its function is as follows. Critical role in copper (specific) homeostasis and detoxification. May protect by directly chelating and sequestering copper ions. The polypeptide is Metallothionein-like protein CRS5 (CRS5) (Saccharomyces cerevisiae (strain RM11-1a) (Baker's yeast)).